The primary structure comprises 582 residues: V-type ATP synthase alpha chain (582 aa).

231–238 (GPFGSGKT) provides a ligand contact to ATP.

It belongs to the ATPase alpha/beta chains family.

The enzyme catalyses ATP + H2O + 4 H(+)(in) = ADP + phosphate + 5 H(+)(out). In terms of biological role, produces ATP from ADP in the presence of a proton gradient across the membrane. The V-type alpha chain is a catalytic subunit. This chain is V-type ATP synthase alpha chain, found in Deinococcus geothermalis (strain DSM 11300 / CIP 105573 / AG-3a).